Reading from the N-terminus, the 1127-residue chain is Elongation factor-like GTPase 1 (1127 aa).

Residues 17 to 272 (ANIRNICVLA…LLKTLWGDYY (256 aa)) enclose the tr-type G domain. Residues 26 to 33 (AHVDHGKT), 92 to 96 (DSPGH), and 146 to 149 (NKID) contribute to the GTP site. Positions 429–496 (KPRPLTQEEM…VASVSRQPVS (68 aa)) are disordered. Composition is skewed to basic and acidic residues over residues 438 to 452 (MAQR…HAEK) and 474 to 484 (SPHEDEPRGDE). Position 528 is an N6-acetyllysine (Lys-528).

The protein belongs to the TRAFAC class translation factor GTPase superfamily. Classic translation factor GTPase family. Associates with the 60S ribosomal subunit. Found in a complex consisting of the 60S ribosomal subunit, SBDS and EFL1.

The enzyme catalyses GTP + H2O = GDP + phosphate + H(+). Its activity is regulated as follows. GTPase activity is stimulated in the presence of 60S ribosome subunits. Functionally, GTPase involved in the biogenesis of the 60S ribosomal subunit and translational activation of ribosomes. Together with SBDS, triggers the GTP-dependent release of EIF6 from 60S pre-ribosomes in the cytoplasm, thereby activating ribosomes for translation competence by allowing 80S ribosome assembly and facilitating EIF6 recycling to the nucleus, where it is required for 60S rRNA processing and nuclear export. The sequence is that of Elongation factor-like GTPase 1 (Efl1) from Mus musculus (Mouse).